The chain runs to 940 residues: Gamma-aminobutyric acid type B receptor subunit 2 (940 aa).

The signal sequence occupies residues 1 to 40 (MASPPSSGQPRPPPPPPPPARLLLPLLLSLLLWLAPGAWG). The Extracellular portion of the chain corresponds to 41–482 (WTRGAPRPPP…LRKISLPLYS (442 aa)). N-linked (GlcNAc...) asparagine glycosylation is present at Asn-89. Intrachain disulfides connect Cys-107-Cys-134, Cys-236-Cys-265, and Cys-264-Cys-301. N-linked (GlcNAc...) asparagine glycosylation is found at Asn-297, Asn-388, Asn-403, and Asn-452. A helical transmembrane segment spans residues 483 to 503 (ILSALTILGMIMASAFLFFNI). The Cytoplasmic portion of the chain corresponds to 504–521 (KNRNQKLIKMSSPYMNNL). Residues 522-542 (IILGGMLSYASIFLFGLDGSF) traverse the membrane as a helical segment. Residues 543–550 (VSEKTFET) are Extracellular-facing. A helical membrane pass occupies residues 551–571 (LCTVRTWILTVGYTTAFGAMF). Topologically, residues 572 to 596 (AKTWRVHAIFKNVKMKKKIIKDQKL) are cytoplasmic. Residues 597–617 (LVIVGGMLLIDLCILICWQAV) traverse the membrane as a helical segment. Residues 618 to 653 (DPLRRTVERYSMEPDPAGRDISIRPLLEHCENTHMT) lie on the Extracellular side of the membrane. Residues 654–674 (IWLGIVYAYKGLLMLFGCFLA) traverse the membrane as a helical segment. The Cytoplasmic segment spans residues 675–690 (WETRNVSIPALNDSKY). Residues 691–711 (IGMSVYNVGIMCIIGAAVSFL) traverse the membrane as a helical segment. Topologically, residues 712-719 (TRDQPNVQ) are extracellular. Residues 720 to 740 (FCIVALVIIFCSTITLCLVFV) form a helical membrane-spanning segment. Over 741–940 (PKLITLRTNP…PSFRVMVSGL (200 aa)) the chain is Cytoplasmic. The tract at residues 762–789 (TQNQKKEDSKTSTSVTSVNQASTSRLEG) is disordered. Polar residues predominate over residues 772–786 (TSTSVTSVNQASTSR). 2 positions are modified to phosphoserine: Ser-775 and Ser-778. Residues 780 to 818 (NQASTSRLEGLQSENHRLRMKITELDKDLEEVTMQLQDT) are a coiled coil. Thr-818 carries the phosphothreonine modification. 6 positions are modified to phosphoserine: Ser-883, Ser-892, Ser-912, Ser-915, Ser-919, and Ser-923.

This sequence belongs to the G-protein coupled receptor 3 family. GABA-B receptor subfamily. Heterodimer of GABBR1 and GABBR2. Homodimers may form, but are inactive. Interacts (via C-terminus) with ATF4 (via leucine zipper domain). Interacts with KCTD8, KCTD12 and KCTD16; this interaction determines the pharmacology and kinetics of the receptor response, the KCTD proteins markedly accelerating the GABA-B response, although to different extents. In terms of tissue distribution, highly expressed in areas of the brain including thalamic nuclei, the hippocampus, cerebellar Purkinje cells and the medial habenula, and moderately expressed in the cerebral cortex, certain anterioventral thalamic nuclei, dorsal medial hypothalamic nucleus and suprachiasmatic nuclei. Also weakly expressed in the testis.

The protein resides in the cell membrane. The protein localises to the postsynaptic cell membrane. Its subcellular location is the perikaryon. It localises to the cell projection. It is found in the dendrite. Functionally, component of a heterodimeric G-protein coupled receptor for GABA, formed by GABBR1 and GABBR2. Within the heterodimeric GABA receptor, only GABBR1 seems to bind agonists, while GABBR2 mediates coupling to G proteins. Ligand binding causes a conformation change that triggers signaling via guanine nucleotide-binding proteins (G proteins) and modulates the activity of down-stream effectors, such as adenylate cyclase. Signaling inhibits adenylate cyclase, stimulates phospholipase A2, activates potassium channels, inactivates voltage-dependent calcium-channels and modulates inositol phospholipid hydrolysis. Plays a critical role in the fine-tuning of inhibitory synaptic transmission. Pre-synaptic GABA receptor inhibits neurotransmitter release by down-regulating high-voltage activated calcium channels, whereas postsynaptic GABA receptor decreases neuronal excitability by activating a prominent inwardly rectifying potassium (Kir) conductance that underlies the late inhibitory postsynaptic potentials. Not only implicated in synaptic inhibition but also in hippocampal long-term potentiation, slow wave sleep, muscle relaxation and antinociception. This Rattus norvegicus (Rat) protein is Gamma-aminobutyric acid type B receptor subunit 2 (Gabbr2).